The sequence spans 96 residues: Frd operon uncharacterized protein C (96 aa).

Belongs to the HupF/HypC family.

In Proteus vulgaris, this protein is Frd operon uncharacterized protein C.